A 152-amino-acid polypeptide reads, in one-letter code: Endoribonuclease YbeY (152 aa).

The Zn(2+) site is built by H117, H121, and H127.

The protein belongs to the endoribonuclease YbeY family. Zn(2+) is required as a cofactor.

It localises to the cytoplasm. In terms of biological role, single strand-specific metallo-endoribonuclease involved in late-stage 70S ribosome quality control and in maturation of the 3' terminus of the 16S rRNA. This Sulfurihydrogenibium sp. (strain YO3AOP1) protein is Endoribonuclease YbeY.